The sequence spans 364 residues: MAQNVQENEQVMSTEDLLQAQIELYHHCLAFIKSMALRAATDLRIPDAIHCNGGAATLTDLAAHVGLHPTKLSHLRRLMRVLTLSGIFTVHDGDGEATYTLTRVSRLLLSDGVERTHGLSQMVRVFVNPVAVASQFSLHEWFTVEKAAAVSLFEVAHGCTRWEMIANDSKDGSMFNAGMVEDSSVAMDIILRKSSNVFRGINSLVDVGGGYGAVAAAVVRAFPDIKCTVLDLPHIVAKAPSNNNIQFVGGDLFEFIPAADVVLLKCILHCWQHDDCVKIMRRCKEAISARDAGGKVILIEVVVGIGSNETVPKEMQLLFDVFMMYTDGIEREEHEWKKIFLEAGFSDYKIIPVLGVRSIIEVYP.

S-adenosyl-L-homocysteine contacts are provided by glycine 208, aspartate 231, aspartate 251, and lysine 265. The active-site Proton acceptor is histidine 269. Active-site residues include glutamate 300 and glutamate 330.

The protein belongs to the class I-like SAM-binding methyltransferase superfamily. Cation-independent O-methyltransferase family. In terms of assembly, homodimer. Expressed in leaves, stems and flowers.

The protein localises to the cytoplasm. It catalyses the reaction N-acetylserotonin + S-adenosyl-L-methionine = melatonin + S-adenosyl-L-homocysteine + H(+). It functions in the pathway aromatic compound metabolism; melatonin biosynthesis; melatonin from serotonin: step 1/2. In terms of biological role, methyltransferase which catalyzes the transfer of a methyl group onto N-acetylserotonin, producing melatonin (N-acetyl-5-methoxytryptamine). In Oryza sativa subsp. japonica (Rice), this protein is Acetylserotonin O-methyltransferase 1.